Consider the following 452-residue polypeptide: uncharacterized protein (452 aa).

Its subcellular location is the cytoplasm. It is found in the nucleus. This is an uncharacterized protein from Schizosaccharomyces pombe (strain 972 / ATCC 24843) (Fission yeast).